The sequence spans 364 residues: mRNA decay activator protein ZFP36L2-B (364 aa).

Residues 102–111 (SFSENGERSQ) are compositionally biased toward basic and acidic residues. Residues 102 to 129 (SFSENGERSQHLLHLQQQQQQQKAGAQV) are disordered. Over residues 113 to 123 (LLHLQQQQQQQ) the composition is skewed to low complexity. Residues 133–138 (RYKTEL) carry the RNA-binding motif. C3H1-type zinc fingers lie at residues 133–161 (RYKT…HGFH) and 171–199 (KYKT…HNAE). The tract at residues 150 to 191 (YGEKCQFAHGFHELRSLTRHPKYKTELCRTFHTIGFCPYGPR) is RNA-binding. Positions 308–350 (SESPVFDAPPSPPDSLSDRDSYLSGSLSSGSLSGSDSPTLDSN) are disordered. Over residues 329-348 (YLSGSLSSGSLSGSDSPTLD) the composition is skewed to low complexity.

In terms of processing, phosphorylated. As to expression, remains unlocalized in the egg and early embryo. From stage 21 (late neurula), expressed around the pronephros in the anterior crests, pharyngeal arch, hindbrain, mesodermal tissues around the pronephros and tail-bud. This expression pattern is maintained up to the tadpole stage.

It is found in the nucleus. Its subcellular location is the cytoplasm. Functionally, zinc-finger RNA-binding protein that destabilizes several cytoplasmic AU-rich element (ARE)-containing mRNA transcripts by promoting their poly(A) tail removal or deadenylation, and hence provide a mechanism for attenuating protein synthesis. Acts as a 3'-untranslated region (UTR) ARE mRNA-binding adapter protein to communicate signaling events to the mRNA decay machinery. Functions by recruiting the CCR4-NOT deadenylase complex and probably other components of the cytoplasmic RNA decay machinery to the bound ARE-containing mRNAs, and hence promotes ARE-mediated mRNA deadenylation and decay processes. Binds to 3'-UTR ARE of numerous mRNAs. Also induces the degradation of ARE-containing mRNAs even in absence of poly(A) tail. Required for tubulogenesis during pronephros development. The chain is mRNA decay activator protein ZFP36L2-B (zfp36l2-B) from Xenopus laevis (African clawed frog).